A 204-amino-acid polypeptide reads, in one-letter code: Protein GrpE (204 aa).

Residues 1-12 (MSNEEQAQKDDA) are compositionally biased toward basic and acidic residues. Residues 1 to 32 (MSNEEQAQKDDAQPVNEAAIDATAEQADAEVE) are disordered. The span at 17–26 (EAAIDATAEQ) shows a compositional bias: low complexity.

This sequence belongs to the GrpE family. As to quaternary structure, homodimer.

It localises to the cytoplasm. Its function is as follows. Participates actively in the response to hyperosmotic and heat shock by preventing the aggregation of stress-denatured proteins, in association with DnaK and GrpE. It is the nucleotide exchange factor for DnaK and may function as a thermosensor. Unfolded proteins bind initially to DnaJ; upon interaction with the DnaJ-bound protein, DnaK hydrolyzes its bound ATP, resulting in the formation of a stable complex. GrpE releases ADP from DnaK; ATP binding to DnaK triggers the release of the substrate protein, thus completing the reaction cycle. Several rounds of ATP-dependent interactions between DnaJ, DnaK and GrpE are required for fully efficient folding. The polypeptide is Protein GrpE (Pseudoalteromonas atlantica (strain T6c / ATCC BAA-1087)).